We begin with the raw amino-acid sequence, 262 residues long: uncharacterized protein (262 aa).

A divalent metal cation is bound by residues His-7, His-9, Glu-96, His-132, His-156, and Asp-211.

It belongs to the metallo-dependent hydrolases superfamily. TatD-type hydrolase family. The cofactor is a divalent metal cation.

This is an uncharacterized protein from Mycoplasma genitalium (strain ATCC 33530 / DSM 19775 / NCTC 10195 / G37) (Mycoplasmoides genitalium).